The sequence spans 382 residues: Intermediate transcription factor 3 large subunit (382 aa).

The protein belongs to the poxviruses A23 family. As to quaternary structure, heterodimer of a 45 kDa and a 32 kDa subunit.

Its function is as follows. Acts with RNA polymerase to initiate transcription from intermediate gene promoters. This chain is Intermediate transcription factor 3 large subunit (VITF3L), found in Monkeypox virus (strain Zaire-96-I-16) (MPX).